A 330-amino-acid chain; its full sequence is Pseudouridine-5'-phosphate glycosidase (330 aa).

Residue glutamate 50 is the Proton donor of the active site. Substrate contacts are provided by lysine 112 and valine 132. Mn(2+) is bound at residue aspartate 164. Residue 166–168 participates in substrate binding; sequence SSD. Catalysis depends on lysine 185, which acts as the Nucleophile.

It belongs to the pseudouridine-5'-phosphate glycosidase family. In terms of assembly, homotrimer. Mn(2+) is required as a cofactor.

It is found in the peroxisome. The enzyme catalyses D-ribose 5-phosphate + uracil = psi-UMP + H2O. Catalyzes the reversible cleavage of pseudouridine 5'-phosphate (PsiMP) to ribose 5-phosphate and uracil. Functions biologically in the cleavage direction, as part of a pseudouridine degradation pathway. Acts together with the pseudouridine kinase PUKI in the peroxisome to prevent toxic pseudouridine monophosphate accumulation. Can catalyze the formation of pseudouridine 5'-phosphate (reverse reaction) in vitro, with a catalytic efficiency 4 times lower than the hydrolysis reaction. This Arabidopsis thaliana (Mouse-ear cress) protein is Pseudouridine-5'-phosphate glycosidase.